The sequence spans 134 residues: Large ribosomal subunit protein bL19 (134 aa).

Positions 108-134 are disordered; it reads KSARIVERSDRSDKAKAQKAAAATAAE. The segment covering 111–123 has biased composition (basic and acidic residues); sequence RIVERSDRSDKAK. Residues 125-134 are compositionally biased toward low complexity; it reads QKAAAATAAE.

It belongs to the bacterial ribosomal protein bL19 family.

Its function is as follows. This protein is located at the 30S-50S ribosomal subunit interface and may play a role in the structure and function of the aminoacyl-tRNA binding site. The chain is Large ribosomal subunit protein bL19 from Methylorubrum extorquens (strain PA1) (Methylobacterium extorquens).